Reading from the N-terminus, the 340-residue chain is Zinc finger protein 367 (340 aa).

The interval 96–140 (LPTLRGAPPSSASVAAVSGGEDEEEASSPDSGHLKDGIRRGRPRA) is disordered. Low complexity predominate over residues 101–114 (GAPPSSASVAAVSG). Basic and acidic residues predominate over residues 127 to 140 (GHLKDGIRRGRPRA). 2 C2H2-type zinc fingers span residues 157-179 (IRCN…KRTH) and 185-209 (YLCD…QRLH). The segment at 280-317 (KGKLVQKADQEQQDPLEYLQSDEEDDEKSGAQRRLQEQ) is disordered. Residues 299–332 (QSDEEDDEKSGAQRRLQEQRERLHGALALIELAN) are a coiled coil. Residue S300 is modified to Phosphoserine. Basic and acidic residues predominate over residues 307–317 (KSGAQRRLQEQ).

The protein belongs to the krueppel C2H2-type zinc-finger protein family.

It localises to the nucleus. In terms of biological role, transcriptional activator. May be involved in transcriptional activation of erythroid genes. This is Zinc finger protein 367 (Znf367) from Rattus norvegicus (Rat).